The primary structure comprises 460 residues: Rab-3A-interacting protein (460 aa).

Phosphoserine occurs at positions 147, 149, 247, 250, 272, and 280. Positions 149 to 244 form a coiled coil; that stretch reads SVLEVREKGY…EVAALKTLVL (96 aa). The interval 246 to 280 is disordered; sequence SSPTSPTQEPLAAGKTPFKRGHTRNKSTSSAMSGS. The span at 271–280 shows a compositional bias: polar residues; sequence KSTSSAMSGS.

The protein belongs to the SEC2 family. As to quaternary structure, homodimer. Interacts with the N-terminal region of SSX2. Interacts with the GDP-bound forms of RAB8A and RAB8B. The interaction with RAB8A is prevented by phosphorylation of RAB8A at 'Thr-72'. Interacts with the GDP-bound forms of RAB3A and RAB3D. Interacts with DCDC1. Interacts (via the N-terminal region) with TRAPPC14; this interaction mediates RAB3IP association with the TRAPP II complex. Forms a heterotetramer with RAB11A where RAB3IP homodimer binds two RAB11A subunits. Forms a complex with RAB11A and RAB11FIP3, probably a heterohexamer with two of each protein subunit, where Rabin8/RAB3IP and RAB11FIP3 simultaneously bind to RAB11A; the complex promotes preciliary trafficking. Forms a complex containing RAB11A, ASAP1, RAB3IP, RAP11FIP3 and ARF4; the complex promotes preciliary trafficking; the complex binds to RHO in photoreceptor cells and promotes RHO ciliary transport. In terms of tissue distribution, ubiquitously expressed. Expressed at highest level in testis.

Its subcellular location is the cytoplasm. The protein resides in the nucleus. It is found in the cytoskeleton. It localises to the cell projection. The protein localises to the lamellipodium. Guanine nucleotide exchange factor (GEF) which may activate RAB8A and RAB8B. Promotes the exchange of GDP to GTP, converting inactive GDP-bound Rab proteins into their active GTP-bound form. Mediates the release of GDP from RAB8A and RAB8B but not from RAB3A or RAB5. Modulates actin organization and promotes polarized transport of RAB8A-specific vesicles to the cell surface. Together with RAB11A, RAB8A, the exocyst complex, PARD3, PRKCI, ANXA2, CDC42 and DNMBP promotes transcytosis of PODXL to the apical membrane initiation sites (AMIS), apical surface formation and lumenogenesis. Together with RAB11A and FIP3/RAB11FIP3, parts of the ciliary targeting complex that promotes preciliary vesicle trafficking to mother centriole and ciliogenesis initiation. Part of the ciliary targeting complex containing Rab11, ASAP1, RAB3IP and RAB11FIP3 and ARF4 that promotes RAB3IP preciliary vesicle trafficking to mother centriole and ciliogenesis initiation. This Rattus norvegicus (Rat) protein is Rab-3A-interacting protein (Rab3ip).